A 432-amino-acid polypeptide reads, in one-letter code: Glutamyl-tRNA reductase (432 aa).

Substrate is bound by residues 55–58 (TCNR), serine 114, 119–121 (ETQ), and glutamine 125. The active-site Nucleophile is the cysteine 56. 194 to 199 (GAGEMI) provides a ligand contact to NADP(+).

Belongs to the glutamyl-tRNA reductase family. In terms of assembly, homodimer.

It catalyses the reaction (S)-4-amino-5-oxopentanoate + tRNA(Glu) + NADP(+) = L-glutamyl-tRNA(Glu) + NADPH + H(+). The protein operates within porphyrin-containing compound metabolism; protoporphyrin-IX biosynthesis; 5-aminolevulinate from L-glutamyl-tRNA(Glu): step 1/2. Catalyzes the NADPH-dependent reduction of glutamyl-tRNA(Glu) to glutamate 1-semialdehyde (GSA). This chain is Glutamyl-tRNA reductase, found in Burkholderia multivorans (strain ATCC 17616 / 249).